The following is a 463-amino-acid chain: MENVLVKQLYRLSSEFGGKKVRLSGWVRTIRASKSFGFIEINDGSFFKNIQVVFDDKLDNFKEISKFIISSTITVEGEFVLTPNAKQPFEIHAENITLEGNSDNDYPLQKKRHTLEYLRSIAHLRPRSNTFSAVFRVRSLAAYAVHKFFQERDFVYVNTPLITASDAEGAGEMFQVTTLDLKNPPKNEEGNIDFSKDFFGKKANLTVSGQLSAETFALAFRNVYTFGPTFRAEESNTTRHAAEFWMIEPEMAFAELSDYLDTAEEMVKYIINFVMENAPEEMEFFNTRIDKGLFDRLHNVVNSEFGRITYTEAVDILEKSGEKFEYPVKWGIDLQTEHERYLTDKVFKKPLFVTDYPKDIKAFYMRINDDNKTVAAADLLVPGVGEIIGGSQREERLAVLEKRMEELNLNKEDYWWYLELRKYGETKHSGYGLGFERMIMYLTGISNIRDVIPFPRTTGSAEF.

The protein belongs to the class-II aminoacyl-tRNA synthetase family. As to quaternary structure, homodimer.

It localises to the cytoplasm. It carries out the reaction tRNA(Asn) + L-asparagine + ATP = L-asparaginyl-tRNA(Asn) + AMP + diphosphate + H(+). This chain is Asparagine--tRNA ligase, found in Clostridium acetobutylicum (strain ATCC 824 / DSM 792 / JCM 1419 / IAM 19013 / LMG 5710 / NBRC 13948 / NRRL B-527 / VKM B-1787 / 2291 / W).